The sequence spans 245 residues: CMRF35-like molecule 3 (245 aa).

The first 18 residues, 1–18 (MWQFPALLFLFLPGCCTA), serve as a signal peptide directing secretion. An Ig-like V-type domain is found at 19–124 (QDPVTGPEEV…TDPMFKVNVN (106 aa)). Over 19-189 (QDPVTGPEEV…FIWSLLSSIS (171 aa)) the chain is Extracellular. Cysteine 40 and cysteine 108 are disulfide-bonded. Important for maintaining surface expression and for interaction with FCER1G stretches follow at residues 177 to 182 (NSLFIW) and 189 to 198 (SFLLMVFVVV). The helical transmembrane segment at 190 to 210 (FLLMVFVVVPLLLSMLSAVLW) threads the bilayer. Residues 211–245 (VNRPQRHYGGGEIGLVETHRSDALDGEKHFPGDEK) lie on the Cytoplasmic side of the membrane.

It belongs to the CD300 family. In terms of assembly, interacts with FCER1G; the interaction may be indirect. Interacts with TLR9. Highly expressed in bone marrow-derived mast cells and macrophages, peripheral blood monocytes and CD11c+ cells, with weaker expression detected in CD11b cells in bone marrow and peripheral blood. Not detected in B220+ cells in bone marrow or spleen, in Thy-1.2+ or CD3+ cells in peripheral blood, spleen or thymus, or in NK1.1+ cells in spleen (at protein level). Widely expressed in various tissues including heart, liver, spleen, lung, kidney, brain, bone marrow, thymus, axillary lymph node and mesenteric lymph node. Highly expressed in macrophage cell lines J774.1 and RAW 264.7 and in mast cell line MC/9. Weak expression detected in B-lineage cell lines WEHI-231 and A20 and in dendritic cell line DC2.4. Not detected in other myeloid cell lines or T-lineage cell lines.

It localises to the cell membrane. It is found in the early endosome. The protein localises to the lysosome. In terms of biological role, acts as an activating receptor inducing cytokine production in mast cells. Can act as a positive regulator of TLR9 signaling in macrophages, leading to enhanced production of pro-inflammatory cytokines. The chain is CMRF35-like molecule 3 from Mus musculus (Mouse).